Here is a 609-residue protein sequence, read N- to C-terminus: Phosphomethylpyrimidine synthase (609 aa).

Substrate contacts are provided by residues Asn-219, Met-248, Tyr-277, His-313, 333–335 (SRG), 374–377 (DGLR), and Glu-413. His-417 provides a ligand contact to Zn(2+). Tyr-440 contributes to the substrate binding site. His-481 contributes to the Zn(2+) binding site. [4Fe-4S] cluster contacts are provided by Cys-561, Cys-564, and Cys-569.

It belongs to the ThiC family. It depends on [4Fe-4S] cluster as a cofactor.

It carries out the reaction 5-amino-1-(5-phospho-beta-D-ribosyl)imidazole + S-adenosyl-L-methionine = 4-amino-2-methyl-5-(phosphooxymethyl)pyrimidine + CO + 5'-deoxyadenosine + formate + L-methionine + 3 H(+). The protein operates within cofactor biosynthesis; thiamine diphosphate biosynthesis. Catalyzes the synthesis of the hydroxymethylpyrimidine phosphate (HMP-P) moiety of thiamine from aminoimidazole ribotide (AIR) in a radical S-adenosyl-L-methionine (SAM)-dependent reaction. The protein is Phosphomethylpyrimidine synthase of Deinococcus geothermalis (strain DSM 11300 / CIP 105573 / AG-3a).